Reading from the N-terminus, the 203-residue chain is Dephospho-CoA kinase (203 aa).

The DPCK domain occupies 3–202 (KIGLTGSIGM…MRIAKGDFRN (200 aa)). 11–16 (GMGKST) is a binding site for ATP.

The protein belongs to the CoaE family.

Its subcellular location is the cytoplasm. The catalysed reaction is 3'-dephospho-CoA + ATP = ADP + CoA + H(+). It participates in cofactor biosynthesis; coenzyme A biosynthesis; CoA from (R)-pantothenate: step 5/5. Functionally, catalyzes the phosphorylation of the 3'-hydroxyl group of dephosphocoenzyme A to form coenzyme A. This is Dephospho-CoA kinase from Rhizobium etli (strain ATCC 51251 / DSM 11541 / JCM 21823 / NBRC 15573 / CFN 42).